The sequence spans 298 residues: tRNA pseudouridine synthase B (298 aa).

D46 functions as the Nucleophile in the catalytic mechanism.

It belongs to the pseudouridine synthase TruB family. Type 1 subfamily.

It catalyses the reaction uridine(55) in tRNA = pseudouridine(55) in tRNA. Functionally, responsible for synthesis of pseudouridine from uracil-55 in the psi GC loop of transfer RNAs. This is tRNA pseudouridine synthase B from Paracoccus denitrificans (strain Pd 1222).